Consider the following 506-residue polypeptide: Trans-cinnamate 4-monooxygenase (506 aa).

A helical transmembrane segment spans residues 3–23; the sequence is DFVLLEKALLGLFIATIVAIT. Residues 214–219 and alanine 307 each bind (E)-cinnamate; that span reads RSRLAQ. A heme-binding site is contributed by cysteine 448.

It belongs to the cytochrome P450 family. Requires heme as cofactor.

The protein resides in the membrane. The enzyme catalyses (E)-cinnamate + reduced [NADPH--hemoprotein reductase] + O2 = (E)-4-coumarate + oxidized [NADPH--hemoprotein reductase] + H2O + H(+). It functions in the pathway phenylpropanoid metabolism; trans-4-coumarate biosynthesis; trans-4-coumarate from trans-cinnamate: step 1/1. In terms of biological role, catalyzes the first oxidative step of the phenylpropanoid pathway in higher plants by transforming trans-cinnamate into p-coumarate. The compounds formed by this pathway are essential components for lignification, pollination, and defense against ultraviolet light, predators and pathogens. The chain is Trans-cinnamate 4-monooxygenase (CYP73A10) from Petroselinum crispum (Parsley).